Consider the following 66-residue polypeptide: DNA-directed RNA polymerase subunit Rpo10 (66 aa).

Zn(2+) contacts are provided by C7, C10, C44, and C45.

Belongs to the archaeal Rpo10/eukaryotic RPB10 RNA polymerase subunit family. Part of the RNA polymerase complex. Requires Zn(2+) as cofactor.

Its subcellular location is the cytoplasm. The enzyme catalyses RNA(n) + a ribonucleoside 5'-triphosphate = RNA(n+1) + diphosphate. DNA-dependent RNA polymerase (RNAP) catalyzes the transcription of DNA into RNA using the four ribonucleoside triphosphates as substrates. In Hyperthermus butylicus (strain DSM 5456 / JCM 9403 / PLM1-5), this protein is DNA-directed RNA polymerase subunit Rpo10.